Here is a 2377-residue protein sequence, read N- to C-terminus: Serine/threonine-protein kinase WNK1 (2377 aa).

Disordered regions lie at residues methionine 1–arginine 79 and leucine 93–aspartate 203. Phosphothreonine occurs at positions 17 and 58. A compositionally biased stretch (basic and acidic residues) spans arginine 48–arginine 64. Composition is skewed to low complexity over residues proline 101–glutamine 111 and valine 127–proline 141. Over residues serine 149–threonine 158 the composition is skewed to polar residues. 2 positions are modified to phosphoserine: serine 165 and serine 172. Positions leucine 221–phenylalanine 479 constitute a Protein kinase domain. Serine 231 contacts ATP. Residues phenylalanine 283 and leucine 299 each contribute to the chloride site. ATP contacts are provided by residues threonine 301–methionine 304 and lysine 351. Aspartate 368 functions as the Proton acceptor in the catalytic mechanism. Leucine 369 and leucine 371 together coordinate chloride. Phosphoserine; by autocatalysis occurs at positions 378 and 382. The autoinhibitory domain stretch occupies residues glutamate 488–alanine 555. The segment covering glutamine 573 to serine 588 has biased composition (basic and acidic residues). Disordered regions lie at residues glutamine 573–threonine 782 and proline 1013–lysine 1114. 3 stretches are compositionally biased toward polar residues: residues asparagine 593 to valine 628, histidine 638 to proline 705, and serine 713 to serine 733. The interval glutamate 629–glutamine 639 is interaction with KLHL3. A compositionally biased stretch (low complexity) spans glutamine 734–proline 746. Residues threonine 747–threonine 782 show a composition bias toward polar residues. Positions threonine 1018–glutamine 1028 are enriched in low complexity. Positions alanine 1029–serine 1038 are enriched in polar residues. Residues proline 1042 to proline 1058 show a composition bias toward low complexity. The span at serine 1075 to serine 1085 shows a compositional bias: polar residues. The span at threonine 1093–lysine 1114 shows a compositional bias: basic residues. The short motif at arginine 1252–valine 1255 is the RFXV motif 1 element. Residue serine 1256 is modified to Phosphoserine. Disordered regions lie at residues glycine 1726–proline 1760 and threonine 1818–alanine 1847. Residues proline 1738–glycine 1748 are compositionally biased toward low complexity. Position 1843 is a phosphothreonine (threonine 1843). Residues arginine 1854–valine 1857 carry the RFXV motif 2 motif. A disordered region spans residues threonine 1860 to threonine 1945. Over residues aspartate 1863–histidine 1879 the composition is skewed to basic and acidic residues. Positions serine 1882–valine 1900 are enriched in low complexity. Short sequence motifs (RFXV motif) lie at residues arginine 1940–valine 1943 and arginine 1952–valine 1955. The segment covering glutamate 1959–glycine 1969 has biased composition (basic and acidic residues). Disordered stretches follow at residues glutamate 1959 to isoleucine 1984, proline 1989 to aspartate 2008, serine 2015 to aspartate 2064, valine 2107 to serine 2191, and serine 2203 to glycine 2239. The residue at position 1973 (serine 1973) is a Phosphoserine. The span at proline 1989–glutamate 1998 shows a compositional bias: basic and acidic residues. A phosphoserine mark is found at serine 2006, serine 2007, serine 2022, serine 2024, and serine 2027. Residues serine 2035–aspartate 2057 show a composition bias toward low complexity. Serine 2116 carries the phosphoserine modification. The segment covering glycine 2117 to lysine 2129 has biased composition (basic residues). The span at serine 2130–serine 2140 shows a compositional bias: low complexity. A compositionally biased stretch (polar residues) spans proline 2141–serine 2191. A compositionally biased stretch (low complexity) spans glycine 2208 to alanine 2232. The segment at serine 2236–alanine 2256 is amphipathic alpha-helix. Phosphoserine is present on residues serine 2265 and serine 2281. Residues proline 2325 to glycine 2344 are disordered. Residues serine 2365 and serine 2367 each carry the phosphoserine modification.

This sequence belongs to the protein kinase superfamily. Ser/Thr protein kinase family. WNK subfamily. In terms of assembly, interacts with WNK3. Interacts with WNK4; inhibiting the activity of WNK4. Interacts with SGK1; promoting its activation. Associates with the mTORC2 complex. Interacts with UVRAG. As to quaternary structure, interacts with isoform 1; inhibiting isoform 1 activity. Mg(2+) serves as cofactor. In terms of processing, autophosphorylated at Ser-378 and Ser-382, promoting its activity. Autophosphorylation at Ser-382 is inhibited by intracellular calcium. Phosphorylation at Thr-58 increases ability to activate SGK1. Ubiquitinated by the BCR(KLHL3) complex, leading to its degradation. Also ubiquitinated by the BCR(KLHL2) complex. Post-translationally, may be O-glycosylated. As to expression, widely expressed in both adult and embryonic tissue, with highest levels observed in the testis and lower levels in heart, lung, kidney, placenta, brain and skeletal muscle. Expressed in pancreatic duct. Two isoforms are expressed in heart, a single shorter isoform in the kidney. Locates to the distal convoluted tubule, the medullary collecting duct and the cortical collecting duct of the kidney. In terms of tissue distribution, restricted to the nervous system, expressed preferentially in sensory neurons than in motor neurons and in general more abundant in axons than in cell bodies (at protein level). In the DRG, predominantly expressed in the satellite cells that envelop sensory neurons, but low expression also observed in the cell bodies of neurons (at protein level). In the sciatic nerve, expressed in the Schwann cells that surround axons and in a mosaic distribution of axons (at protein level). In the spinal cord, expressed in superficial layers (LI and LII), as well as in the fibers of the Lissauer tract (at protein level). Also detected in the axon fibers of dorsolateral funiculus and lateral funiculus (at protein level).

It localises to the cytoplasm. Its subcellular location is the nucleus. It is found in the cytoskeleton. The protein localises to the spindle. The catalysed reaction is L-seryl-[protein] + ATP = O-phospho-L-seryl-[protein] + ADP + H(+). It carries out the reaction L-threonyl-[protein] + ATP = O-phospho-L-threonyl-[protein] + ADP + H(+). Its activity is regulated as follows. Activated in response to hyperosmotic stress: cell shrinkage promotes formation of a membraneless compartment that concentrates WNK1 with its substrates, OXSR1/OSR1 and STK39/SPAK. Activation requires autophosphorylation of Ser-382 and, to a lower extent, Ser-378. Autophosphorylation and subsequent activation is inhibited by increases in intracellular ionic strength: Cl(-) potently inhibits WNK1 kinase activity via direct binding. Also inhibited by K(+) ions. In terms of biological role, serine/threonine-protein kinase component of the WNK1-SPAK/OSR1 kinase cascade, which acts as a key regulator of blood pressure and regulatory volume increase by promoting ion influx. WNK1 mediates regulatory volume increase in response to hyperosmotic stress by acting as a molecular crowding sensor, which senses cell shrinkage and mediates formation of a membraneless compartment by undergoing liquid-liquid phase separation. The membraneless compartment concentrates WNK1 with its substrates, OXSR1/OSR1 and STK39/SPAK, promoting WNK1-dependent phosphorylation and activation of downstream kinases OXSR1/OSR1 and STK39/SPAK. Following activation, OXSR1/OSR1 and STK39/SPAK catalyze phosphorylation of ion cotransporters SLC12A1/NKCC2, SLC12A2/NKCC1, SLC12A5/KCC2 and SLC12A6/KCC3, regulating their activity. Phosphorylation of Na-K-Cl cotransporters SLC12A2/NKCC1 and SLC12A2/NKCC1 promote their activation and ion influx; simultaneously, phosphorylation of K-Cl cotransporters SLC12A5/KCC2 and SLC12A6/KCC3 inhibit their activity, blocking ion efflux. Also acts as a regulator of angiogenesis in endothelial cells. Also acts independently of the WNK1-SPAK/OSR1 kinase cascade by catalyzing phosphorylation of other substrates, such as SYT2, PCF11 and NEDD4L. Mediates phosphorylation of SYT2, regulating SYT2 association with phospholipids and membrane-binding. Regulates mRNA export in the nucleus by mediating phosphorylation of PCF11, thereby decreasing the association between PCF11 and POLR2A/RNA polymerase II and promoting mRNA export to the cytoplasm. Acts as a negative regulator of autophagy. Required for the abscission step during mitosis, independently of the WNK1-SPAK/OSR1 kinase cascade. WNK1 may also play a role in actin cytoskeletal reorganization. Also acts as a scaffold protein independently of its protein kinase activity: negatively regulates cell membrane localization of various transporters and channels, such as SLC4A4, SLC26A6, SLC26A9, TRPV4 and CFTR. Involved in the regulation of epithelial Na(+) channel (ENaC) by promoting activation of SGK1 in a kinase-independent manner: probably acts as a scaffold protein that promotes the recruitment of SGK1 to the mTORC2 complex in response to chloride, leading to mTORC2-dependent phosphorylation and activation of SGK1. Acts as an assembly factor for the ER membrane protein complex independently of its protein kinase activity: associates with EMC2 in the cytoplasm via its amphipathic alpha-helix, and prevents EMC2 ubiquitination and subsequent degradation, thereby promoting EMC2 stabilization. Kinase-defective isoform specifically expressed in kidney, which acts as a dominant-negative regulator of the longer isoform 1. Does not directly inhibit WNK4 and has no direct effect on sodium and chloride ion transport. Down-regulates sodium-chloride cotransporter activity indirectly by inhibiting isoform 1, it associates with isoform 1 and attenuates its kinase activity. In kidney, may play an important role regulating sodium and potassium balance. The chain is Serine/threonine-protein kinase WNK1 from Mus musculus (Mouse).